Reading from the N-terminus, the 347-residue chain is L-threonine 3-dehydrogenase (347 aa).

C43 contributes to the Zn(2+) binding site. Residues T45 and H48 each act as charge relay system in the active site. 6 residues coordinate Zn(2+): H68, E69, C98, C101, C104, and C112. NAD(+) is bound by residues I180, D200, R205, 267–269 (LSL), and 292–293 (IT).

The protein belongs to the zinc-containing alcohol dehydrogenase family. As to quaternary structure, homotetramer. Zn(2+) is required as a cofactor.

It localises to the cytoplasm. It carries out the reaction L-threonine + NAD(+) = (2S)-2-amino-3-oxobutanoate + NADH + H(+). It participates in amino-acid degradation; L-threonine degradation via oxydo-reductase pathway; glycine from L-threonine: step 1/2. Its function is as follows. Catalyzes the NAD(+)-dependent oxidation of L-threonine to 2-amino-3-ketobutyrate. The protein is L-threonine 3-dehydrogenase of Bacillus subtilis (strain 168).